The following is a 160-amino-acid chain: Transmembrane protein 220 (160 aa).

5 helical membrane-spanning segments follow: residues 3–23 (PALWRACNGLMAAFFALAALV), 30–50 (AEVWVVVYTIPAVLTLLVGLN), 62–82 (ISAIHILFCTVWAVGLASYLL), 100–120 (GLVIITAWIILCHSSSKNPVG), and 125–145 (LAIAIVITLFPFISWVYIYIN).

The protein resides in the membrane. In Homo sapiens (Human), this protein is Transmembrane protein 220 (TMEM220).